The primary structure comprises 292 residues: Techylectin-5A (292 aa).

A signal peptide spans 1–23 (MHNLRNILFVITLIGQKYGLTSS). Position 24 is a pyrrolidone carboxylic acid (Gln-24). Positions 63–286 (PIVSPDPTDC…QVEMKIRPVE (224 aa)) constitute a Fibrinogen C-terminal domain. An intrachain disulfide couples Cys-72 to Cys-103. Asn-173, Asn-198, and Asn-214 each carry an N-linked (GlcNAc...) asparagine glycan. Ca(2+)-binding residues include Asp-221, His-225, and Thr-227. Cys-229 and Cys-242 are oxidised to a cystine.

As to quaternary structure, multimeric. PubMed:10468566 and PubMed:11707569 are in disagreement about the nature of the multimer, PubMed:10468566 finds hexamers and octamers, the results in PubMed:11707569 suggest tetramers. Strongly expressed in heart and intestine, weakly expressed in hepatopancreas. Not found in hemocytes, stomach, nervous tissue or skeletal muscle.

It localises to the secreted. Its function is as follows. Lectin involved in innate immunity. Agglutinates all types of human erythrocytes, Gram-positive and Gram-negative bacteria. Has a stronger agglutinating activity towards Gram-negative bacteria than towards Gram-positive bacteria. Specifically recognizes acetyl group-containing substances on agglutinated cells. The hemagglutinating activity was inhibited by EDTA, acetyl group-containing mono- and disaccharides, N-acetyl derivatives of amino acids, other acetyl group-containing substances, propionamide and benzamide. Enhances the antimicrobial activity of big defensin against Gram-positive bacteria but not against Gram-negative bacteria. The polypeptide is Techylectin-5A (Tachypleus tridentatus (Japanese horseshoe crab)).